A 124-amino-acid polypeptide reads, in one-letter code: Small ribosomal subunit protein bS6 (124 aa).

The tract at residues 96 to 124 is disordered; it reads ETGPSPMMKEVQREEAKKAAAAQPTEAQA. Over residues 114–124 the composition is skewed to low complexity; the sequence is AAAAQPTEAQA.

This sequence belongs to the bacterial ribosomal protein bS6 family.

Functionally, binds together with bS18 to 16S ribosomal RNA. This chain is Small ribosomal subunit protein bS6, found in Burkholderia mallei (strain ATCC 23344).